The chain runs to 333 residues: MKGKFLKVSSLFVATLTTATLVSSPAANALSSKAMDNHPQQSQSSKQQTPKIQKGGNLKPLEQREHANVILPNNDRHQITDTTNGHYAPVTYIQVEAPTGTFIASGVVVGKDTLLTNKHVVDATHGDPHALKAFPSAINQDNYPNGGFTAEQITKYSGEGDLAIVKFSPNEQNKHIGEVVKPATMSNNAETQVNQNITVTGYPGDKPVATMWESKGKITYLKGEAMQYDLSTTGGNSGSPVFNEKNEVIGIHWGGVPNEFNGAVFINENVRNFLKQNIEDIHFANDDQPNNPDNPDNPNNPDNPNNPDNPNNPNNPDNPDNGDNNNSDNPDAA.

The first 29 residues, 1–29, serve as a signal peptide directing secretion; sequence MKGKFLKVSSLFVATLTTATLVSSPAANA. A propeptide spanning residues 30-68 is cleaved from the precursor; the sequence is LSSKAMDNHPQQSQSSKQQTPKIQKGGNLKPLEQREHAN. A disordered region spans residues 33–61; it reads KAMDNHPQQSQSSKQQTPKIQKGGNLKPL. Positions 40 to 54 are enriched in low complexity; it reads QQSQSSKQQTPKIQK. Catalysis depends on charge relay system residues His-119, Asp-161, and Ser-237. The segment at 283–333 is disordered; that stretch reads FANDDQPNNPDNPDNPNNPDNPNNPDNPNNPNNPDNPDNGDNNNSDNPDAA. A compositionally biased stretch (low complexity) spans 286 to 333; the sequence is DDQPNNPDNPDNPNNPDNPNNPDNPNNPNNPDNPDNGDNNNSDNPDAA. 11 tandem repeats follow at residues 289–291, 292–294, 295–297, 298–300, 301–303, 304–306, 307–309, 310–312, 313–315, 316–318, and 319–321. Positions 289–321 are 11 X 3 AA repeats of P-[DN]-N; the sequence is PNNPDNPDNPNNPDNPNNPDNPNNPNNPDNPDN.

Belongs to the peptidase S1B family. Post-translationally, proteolytically cleaved by aureolysin (aur). This cleavage leads to the activation of SspA.

It localises to the secreted. The enzyme catalyses Preferential cleavage: Glu-|-Xaa, Asp-|-Xaa.. Its function is as follows. Preferentially cleaves peptide bonds on the carboxyl-terminal side of aspartate and glutamate. Along with other extracellular proteases it is involved in colonization and infection of human tissues. Required for proteolytic maturation of thiol protease SspB and inactivation of SspC, an inhibitor of SspB. It is the most important protease for degradation of fibronectin-binding protein (FnBP) and surface protein A, which are involved in adherence to host cells. May also protect bacteria against host defense mechanism by cleaving the immunoglobulin classes IgG, IgA and IgM. May be involved in the stability of secreted lipases. In Staphylococcus aureus (strain MSSA476), this protein is Glutamyl endopeptidase (sspA).